The chain runs to 140 residues: Large ribosomal subunit protein uL11 (140 aa).

Belongs to the universal ribosomal protein uL11 family. Part of the ribosomal stalk of the 50S ribosomal subunit. Interacts with L10 and the large rRNA to form the base of the stalk. L10 forms an elongated spine to which L12 dimers bind in a sequential fashion forming a multimeric L10(L12)X complex. Post-translationally, one or more lysine residues are methylated.

In terms of biological role, forms part of the ribosomal stalk which helps the ribosome interact with GTP-bound translation factors. The sequence is that of Large ribosomal subunit protein uL11 from Staphylococcus saprophyticus subsp. saprophyticus (strain ATCC 15305 / DSM 20229 / NCIMB 8711 / NCTC 7292 / S-41).